We begin with the raw amino-acid sequence, 459 residues long: tRNA(Ile2) 2-agmatinylcytidine synthetase TiaS (459 aa).

Residues 282-360 (VRVRVWVASI…TINLEKLHII (79 aa)) constitute a DNA-binding region (OB).

The protein belongs to the TiaS family.

Its subcellular location is the cytoplasm. The enzyme catalyses cytidine(34) in tRNA(Ile2) + agmatine + ATP + H2O = 2-agmatinylcytidine(34) in tRNA(Ile2) + AMP + 2 phosphate + 2 H(+). Its function is as follows. ATP-dependent agmatine transferase that catalyzes the formation of 2-agmatinylcytidine (agm2C) at the wobble position (C34) of tRNA(Ile2), converting the codon specificity from AUG to AUA. This Staphylothermus marinus (strain ATCC 43588 / DSM 3639 / JCM 9404 / F1) protein is tRNA(Ile2) 2-agmatinylcytidine synthetase TiaS.